Consider the following 107-residue polypeptide: Iron-binding protein IscA (107 aa).

Cysteine 35, cysteine 99, and cysteine 101 together coordinate Fe cation.

The protein belongs to the HesB/IscA family. As to quaternary structure, homodimer; may form tetramers and higher multimers. Fe cation serves as cofactor.

Is able to transfer iron-sulfur clusters to apo-ferredoxin. Multiple cycles of [2Fe2S] cluster formation and transfer are observed, suggesting that IscA acts catalytically. Recruits intracellular free iron so as to provide iron for the assembly of transient iron-sulfur cluster in IscU in the presence of IscS, L-cysteine and the thioredoxin reductase system TrxA/TrxB. The protein is Iron-binding protein IscA of Pectobacterium carotovorum subsp. carotovorum (strain PC1).